A 426-amino-acid chain; its full sequence is Crinkler effector protein 4 (426 aa).

Residues 20 to 57 form an LQLFLAK domain region; it reads VEIDDSAKVSKLKKVIKEENPATITCDAKDLQLFLAKK. Residues 59–107 are DWL domain; the sequence is DAWLDGAGAAAVELDEHGHPQGCVQMDPTLWVKNPKHFGDNFQPGEGQV. Residues 108–114 carry the HVLVXXP motif motif; that stretch reads HVLVVVP. Positions 115 to 426 are effector domain; the sequence is EGVVGSASET…RSIPTLSYFS (312 aa).

The protein belongs to the Crinkler effector family.

Its subcellular location is the secreted. It localises to the host nucleus. Secreted effector that is critical to pathogenesis by suppressing plant immune responsess. Promotes Phytophthora infection by suppressing the H(2)O(2) accumulation and callose deposition. May induce cell death by regulating expression of cell death-related genes. The sequence is that of Crinkler effector protein 4 from Phytophthora capsici.